A 64-amino-acid polypeptide reads, in one-letter code: Large ribosomal subunit protein bL33c (64 aa).

This sequence belongs to the bacterial ribosomal protein bL33 family.

The protein resides in the plastid. Its subcellular location is the chloroplast. This chain is Large ribosomal subunit protein bL33c (rpl33), found in Trieres chinensis (Marine centric diatom).